We begin with the raw amino-acid sequence, 20 residues long: APDVHTRXTQNGLPPGXLPS.

Residues 1–20 form a disordered region; that stretch reads APDVHTRXTQNGLPPGXLPS.

This chain is Bulb protein, found in Narcissus pseudonarcissus (Daffodil).